The following is a 372-amino-acid chain: Putative glutamate--cysteine ligase 2 (372 aa).

This sequence belongs to the glutamate--cysteine ligase type 2 family. YbdK subfamily. As to quaternary structure, homodimer.

It carries out the reaction L-cysteine + L-glutamate + ATP = gamma-L-glutamyl-L-cysteine + ADP + phosphate + H(+). In terms of biological role, ATP-dependent carboxylate-amine ligase which exhibits weak glutamate--cysteine ligase activity. This is Putative glutamate--cysteine ligase 2 (ybdK) from Escherichia coli O157:H7.